The chain runs to 390 residues: S-adenosylmethionine synthase 2 (390 aa).

Glutamate 9 contacts Mg(2+). Histidine 15 is a binding site for ATP. Glutamate 43 is a binding site for K(+). L-methionine is bound by residues glutamate 56 and glutamine 99. ATP-binding positions include 167–169 (DGK), 235–238 (SGRF), aspartate 246, 252–253 (RK), alanine 269, lysine 273, and lysine 277. L-methionine is bound at residue aspartate 246. Residue lysine 277 coordinates L-methionine.

It belongs to the AdoMet synthase family. As to quaternary structure, homotetramer. The cofactor is Mn(2+). Requires Mg(2+) as cofactor. Co(2+) serves as cofactor. K(+) is required as a cofactor.

Its subcellular location is the cytoplasm. It carries out the reaction L-methionine + ATP + H2O = S-adenosyl-L-methionine + phosphate + diphosphate. Its pathway is amino-acid biosynthesis; S-adenosyl-L-methionine biosynthesis; S-adenosyl-L-methionine from L-methionine: step 1/1. Catalyzes the formation of S-adenosylmethionine from methionine and ATP. The reaction comprises two steps that are both catalyzed by the same enzyme: formation of S-adenosylmethionine (AdoMet) and triphosphate, and subsequent hydrolysis of the triphosphate. This chain is S-adenosylmethionine synthase 2 (METK2), found in Solanum tuberosum (Potato).